The following is a 229-amino-acid chain: Large ribosomal subunit protein uL1 (229 aa).

This sequence belongs to the universal ribosomal protein uL1 family. In terms of assembly, part of the 50S ribosomal subunit.

In terms of biological role, binds directly to 23S rRNA. The L1 stalk is quite mobile in the ribosome, and is involved in E site tRNA release. Protein L1 is also a translational repressor protein, it controls the translation of the L11 operon by binding to its mRNA. This chain is Large ribosomal subunit protein uL1, found in Streptococcus pneumoniae (strain ATCC 700669 / Spain 23F-1).